Here is a 193-residue protein sequence, read N- to C-terminus: Recombination protein RecR (193 aa).

The C4-type zinc-finger motif lies at 61-76 (CSSCNALSESEVCEIC). One can recognise a Toprim domain in the interval 84–170 (SQLCMVLHPR…TFTKIAQGVP (87 aa)).

Belongs to the RecR family.

Its function is as follows. May play a role in DNA repair. It seems to be involved in an RecBC-independent recombinational process of DNA repair. It may act with RecF and RecO. The sequence is that of Recombination protein RecR from Helicobacter pylori (strain G27).